The following is a 265-amino-acid chain: Protein Msed_2121 (265 aa).

The protein belongs to the CinA family.

The chain is Protein Msed_2121 from Metallosphaera sedula (strain ATCC 51363 / DSM 5348 / JCM 9185 / NBRC 15509 / TH2).